We begin with the raw amino-acid sequence, 586 residues long: MAPPAPLLAVRGSEGLFMVNGPPSFTESAVFQRDSGRNCKAVAFSKDGSLFAWCNGEKVNIVNVTSAGLLRSFDLPKVVCLEFSPKNNILATWQAYSAAKDGTAGAPNLQLYDVKTGKCLKSFIQKKMQNWCPCWADDESICARNVNNEVHFFENNNFNTIANKLHLQKVNDFVLSPGAQPTKVAVYVPGSKGAPSFVRLYQYPNFGGPQSALANKSFFKADKVTMLWNKKATAVLVIASTDVDKTGASYYGEQTLHYIATNGESAIVQLPKNGPIYDVVWNPNSVEFCAVYGFMPAKATVFNLKCDPVFDFGTGPRNAAYYSPHGHILVLAGFGNLRGQMEVWDVKNYKLISKPVASDSTYFAWCPDGEHIVTATCAPRLRVSNGYKIWHYTGSVLHNYEVPSNEEMWQVSWQPFLDGVFPVKAVKYQAVPSELPSAEPKPAQAYRPPALRNKPVTSSKLHEDEPPQNMKPQSGSSEKPLSKTALKNQKKHEPKKAAKQEAKADCSQESTQSSASQNTPRSAVPVVTSGDPEIDKKIKNLKKKLKAIEQLKEQAAAGKQLEKNQLEKIQKESALLQELEDLELGL.

3 WD repeats span residues 23-63, 125-163, and 356-401; these read PSFT…NIVN, QKKMQNWCPCWADDESICARNVNNEVHFFENNNFNTIAN, and VASD…HNYE. Positions 434-531 are disordered; it reads ELPSAEPKPA…SAVPVVTSGD (98 aa). The span at 470-479 shows a compositional bias: polar residues; the sequence is MKPQSGSSEK. Residues 495–506 show a composition bias toward basic and acidic residues; it reads KKAAKQEAKADC. The span at 507-521 shows a compositional bias: polar residues; it reads SQESTQSSASQNTPR. Residues 532–583 adopt a coiled-coil conformation; the sequence is PEIDKKIKNLKKKLKAIEQLKEQAAAGKQLEKNQLEKIQKESALLQELEDLE.

It belongs to the WD repeat EIF2A family.

Functionally, functions in the early steps of protein synthesis of a small number of specific mRNAs. Acts by directing the binding of methionyl-tRNAi to 40S ribosomal subunits. In contrast to the eIF-2 complex, it binds methionyl-tRNAi to 40S subunits in a codon-dependent manner, whereas the eIF-2 complex binds methionyl-tRNAi to 40S subunits in a GTP-dependent manner. In Gallus gallus (Chicken), this protein is Eukaryotic translation initiation factor 2A (EIF2A).